We begin with the raw amino-acid sequence, 397 residues long: Xylose isomerase (397 aa).

Residues His54 and Asp57 contribute to the active site. The Mg(2+) site is built by Glu181, Glu217, His220, Asp245, Asp255, Asp257, and Asp293.

The protein belongs to the xylose isomerase family. In terms of assembly, homotetramer. Mg(2+) is required as a cofactor.

The protein resides in the cytoplasm. It catalyses the reaction alpha-D-xylose = alpha-D-xylulofuranose. The sequence is that of Xylose isomerase from Clavibacter sepedonicus (Clavibacter michiganensis subsp. sepedonicus).